A 502-amino-acid polypeptide reads, in one-letter code: ATP synthase subunit alpha (502 aa).

Position 169-176 (169-176) interacts with ATP; sequence GDRQTGKT.

It belongs to the ATPase alpha/beta chains family. F-type ATPases have 2 components, CF(1) - the catalytic core - and CF(0) - the membrane proton channel. CF(1) has five subunits: alpha(3), beta(3), gamma(1), delta(1), epsilon(1). CF(0) has three main subunits: a(1), b(2) and c(9-12). The alpha and beta chains form an alternating ring which encloses part of the gamma chain. CF(1) is attached to CF(0) by a central stalk formed by the gamma and epsilon chains, while a peripheral stalk is formed by the delta and b chains.

The protein localises to the cell inner membrane. It carries out the reaction ATP + H2O + 4 H(+)(in) = ADP + phosphate + 5 H(+)(out). Its function is as follows. Produces ATP from ADP in the presence of a proton gradient across the membrane. The alpha chain is a regulatory subunit. This is ATP synthase subunit alpha from Thermodesulfovibrio yellowstonii (strain ATCC 51303 / DSM 11347 / YP87).